Here is a 350-residue protein sequence, read N- to C-terminus: Inhibin beta E chain (350 aa).

The signal sequence occupies residues 1–21; the sequence is MGLSNVQLWTILLWALAWVQS. The propeptide occupies 22–236; it reads TRSACPSCGA…EPGAGRARRR (215 aa). Asparagine 198 carries N-linked (GlcNAc...) asparagine glycosylation. 4 cysteine pairs are disulfide-bonded: cysteine 240/cysteine 248, cysteine 247/cysteine 315, cysteine 276/cysteine 347, and cysteine 280/cysteine 349.

Belongs to the TGF-beta family. Homodimeric or heterodimeric through association with alpha and beta subunits, linked by one or more disulfide bonds. Inhibins are heterodimers of one alpha and one beta subunit. Activins are homo- or heterodimers of beta subunits only.

Its subcellular location is the secreted. Its function is as follows. Inhibins and activins inhibit and activate, respectively, the secretion of follitropin by the pituitary gland. Inhibins/activins are involved in regulating a number of diverse functions such as hypothalamic and pituitary hormone secretion, gonadal hormone secretion, germ cell development and maturation, erythroid differentiation, insulin secretion, nerve cell survival, embryonic axial development or bone growth, depending on their subunit composition. Inhibins appear to oppose the functions of activins. Functionally, activin E is a homodimer of INHBE secreted by the liver that plays a crucial role in regulating metabolic homeostasis particularly in lipid metabolism and energy homeostasis. Plays a central role in the regulation of adipose tissue lipolysis by preventing the influx of fatty acids from adipose tissue into the liver. Mechanistically, signals via ACVR1C to activate SMAD2/3 signaling, suppressing PPARG target genes in adipose tissue, thereby reducing liver lipid content and improving glycemic control. Induces beige adipocyte formation and thermogenesis in response to cold exposure. In Rattus norvegicus (Rat), this protein is Inhibin beta E chain (Inhbe).